A 382-amino-acid chain; its full sequence is Chaperone protein DnaJ (382 aa).

The J domain maps to 5 to 70 (DYYELLGVQK…EKRAAYDRYG (66 aa)). A CR-type zinc finger spans residues 146–224 (GAEKEISFRK…CHGEGRVRRT (79 aa)). 8 residues coordinate Zn(2+): Cys159, Cys162, Cys176, Cys179, Cys198, Cys201, Cys212, and Cys215. CXXCXGXG motif repeat units follow at residues 159–166 (CERCDGSG), 176–183 (CPTCRGAG), 198–205 (CPTCGGMG), and 212–219 (CTVCHGEG). Residues 230–250 (RIPPGVDNGSRLRSSGNGEAG) are disordered.

The protein belongs to the DnaJ family. Homodimer. Zn(2+) serves as cofactor.

Its subcellular location is the cytoplasm. Its function is as follows. Participates actively in the response to hyperosmotic and heat shock by preventing the aggregation of stress-denatured proteins and by disaggregating proteins, also in an autonomous, DnaK-independent fashion. Unfolded proteins bind initially to DnaJ; upon interaction with the DnaJ-bound protein, DnaK hydrolyzes its bound ATP, resulting in the formation of a stable complex. GrpE releases ADP from DnaK; ATP binding to DnaK triggers the release of the substrate protein, thus completing the reaction cycle. Several rounds of ATP-dependent interactions between DnaJ, DnaK and GrpE are required for fully efficient folding. Also involved, together with DnaK and GrpE, in the DNA replication of plasmids through activation of initiation proteins. In Opitutus terrae (strain DSM 11246 / JCM 15787 / PB90-1), this protein is Chaperone protein DnaJ.